The sequence spans 313 residues: tRNA-cytidine(32) 2-sulfurtransferase (313 aa).

The PP-loop motif signature appears at 47–52; sequence SGGKDS. [4Fe-4S] cluster contacts are provided by cysteine 122, cysteine 125, and cysteine 213.

Belongs to the TtcA family. As to quaternary structure, homodimer. Mg(2+) serves as cofactor. Requires [4Fe-4S] cluster as cofactor.

Its subcellular location is the cytoplasm. The enzyme catalyses cytidine(32) in tRNA + S-sulfanyl-L-cysteinyl-[cysteine desulfurase] + AH2 + ATP = 2-thiocytidine(32) in tRNA + L-cysteinyl-[cysteine desulfurase] + A + AMP + diphosphate + H(+). It participates in tRNA modification. Functionally, catalyzes the ATP-dependent 2-thiolation of cytidine in position 32 of tRNA, to form 2-thiocytidine (s(2)C32). The sulfur atoms are provided by the cysteine/cysteine desulfurase (IscS) system. This chain is tRNA-cytidine(32) 2-sulfurtransferase, found in Yersinia enterocolitica serotype O:8 / biotype 1B (strain NCTC 13174 / 8081).